Reading from the N-terminus, the 465-residue chain is Cerebellar degeneration-related protein 2-like (465 aa).

2 coiled-coil regions span residues 38 to 143 and 188 to 265; these read LLER…EQLR and LEQE…TYLL. Residues 282-314 form a disordered region; the sequence is APEADDPQPGRGDDLGAQDGVSSPAASPGHVVR. A phosphoserine mark is found at Ser-308, Ser-318, and Ser-344. Residues 350 to 377 adopt a coiled-coil conformation; that stretch reads MSILREVDEQYHALLEKYEELLSKCRQH. Residues 382–417 are disordered; the sequence is RHAGVQTSRPISRDSSWRDLRGGEEGQGEVKAGEKS. The span at 392-405 shows a compositional bias: basic and acidic residues; that stretch reads ISRDSSWRDLRGGE.

The protein belongs to the CDR2 family.

The protein is Cerebellar degeneration-related protein 2-like (CDR2L) of Homo sapiens (Human).